The following is a 519-amino-acid chain: Bifunctional pantoate ligase/cytidylate kinase (519 aa).

The tract at residues 1-282 (MNLTILRTKT…CGNTRLIDHG (282 aa)) is pantoate--beta-alanine ligase. Residue 30–37 (MGGLHQGH) coordinates ATP. His37 (proton donor) is an active-site residue. Gln66 provides a ligand contact to (R)-pantoate. Gln66 is a binding site for beta-alanine. Residue 155–158 (GEKD) participates in ATP binding. Gln161 contributes to the (R)-pantoate binding site. Residue 192 to 195 (CSSR) participates in ATP binding. The tract at residues 283–519 (FLMKRNPIVA…PQEVWPTNAT (237 aa)) is cytidylate kinase.

The protein in the N-terminal section; belongs to the pantothenate synthetase family. It in the C-terminal section; belongs to the cytidylate kinase family. Type 1 subfamily.

The protein localises to the cytoplasm. The enzyme catalyses (R)-pantoate + beta-alanine + ATP = (R)-pantothenate + AMP + diphosphate + H(+). It carries out the reaction CMP + ATP = CDP + ADP. It catalyses the reaction dCMP + ATP = dCDP + ADP. It functions in the pathway cofactor biosynthesis; (R)-pantothenate biosynthesis; (R)-pantothenate from (R)-pantoate and beta-alanine: step 1/1. Its function is as follows. Catalyzes the condensation of pantoate with beta-alanine in an ATP-dependent reaction via a pantoyl-adenylate intermediate. Catalyzes the transfer of a phosphate group from ATP to either CMP or dCMP to form CDP or dCDP and ADP, respectively. This chain is Bifunctional pantoate ligase/cytidylate kinase, found in Prochlorococcus marinus (strain SARG / CCMP1375 / SS120).